We begin with the raw amino-acid sequence, 152 residues long: Transcriptional regulator MraZ (152 aa).

2 SpoVT-AbrB domains span residues 5 to 52 (ASAI…PLQE) and 81 to 124 (AHEC…DEAA).

Belongs to the MraZ family. As to quaternary structure, forms oligomers.

It localises to the cytoplasm. It is found in the nucleoid. The sequence is that of Transcriptional regulator MraZ from Shewanella denitrificans (strain OS217 / ATCC BAA-1090 / DSM 15013).